We begin with the raw amino-acid sequence, 533 residues long: Conglutin beta 2 (533 aa).

Residues 1–30 (MGKMRVRFPTLVLVLGIVFLMAVSIGIAYG) form the signal peptide. Residues 31 to 108 (EKDVLKSHER…EQQQGSPSYS (78 aa)) constitute a propeptide that is removed on maturation. Composition is skewed to basic and acidic residues over residues 37–51 (SHERPEEREQEEWQP) and 79–99 (SGYERRQYHERSEQREEREQE). Disordered stretches follow at residues 37-123 (SHER…QRFQ) and 315-337 (KHAQSSSGKDKPSDSGPFNLRSN). 2 Cupin type-1 domains span residues 115 to 273 (YHFS…EEIQ) and 332 to 494 (FNLR…EDIE). 2 N-linked (GlcNAc...) asparagine glycosylation sites follow: asparagine 363 and asparagine 444. Residues 503–533 (SYFANGQPQQQQQQQSEKEGRRGRRGSSLPF) are disordered.

This sequence belongs to the 7S seed storage protein family. Multimers. Give rise to a complex array of processed forms, due to a large number of processing sites and changes in glycosylation.

Seed storage protein. Accumulates during seed development and is hydrolyzed after germination to provide a carbon and nitrogen source for the developing seedling. Functionally, has a lectin-like activity. The chain is Conglutin beta 2 from Lupinus albus (White lupine).